A 277-amino-acid chain; its full sequence is Collectin-10 (277 aa).

The N-terminal stretch at 1–27 is a signal peptide; the sequence is MNGFRVLLRSNLSMLLLLALLHFQSLG. Residue Asn-11 is glycosylated (N-linked (GlcNAc...) asparagine). A disordered region spans residues 41-103; the sequence is THTISPGPKG…IGKKGDKGEK (63 aa). Residues 45–103 form the Collagen-like domain; sequence SPGPKGDDGERGDTGEEGKDGKVGRQGPKGVKGELGDMGAQGNIGKSGPIGKKGDKGEK. Over residues 49–67 the composition is skewed to basic and acidic residues; that stretch reads KGDDGERGDTGEEGKDGKV. In terms of domain architecture, C-type lectin spans 155–271; the sequence is TEEKFYYIVQ…CHLTMYFVCE (117 aa). Disulfide bonds link Cys-176/Cys-270 and Cys-248/Cys-262. Residue Asn-258 is glycosylated (N-linked (GlcNAc...) asparagine).

It belongs to the COLEC10/COLEC11 family. In terms of tissue distribution, expressed mainly in the liver and stomach, but also in muscles, testes, and intestines.

The protein resides in the secreted. It is found in the golgi apparatus. Its subcellular location is the cytoplasm. Lectin that binds to various sugars: galactose &gt; mannose = fucose &gt; N-acetylglucosamine &gt; N-acetylgalactosamine. Acts as a chemoattractant, probably involved in the regulation of cell migration. The chain is Collectin-10 (Colec10) from Mus musculus (Mouse).